The sequence spans 665 residues: MAGMKTATGDYIDSSWELRVFIGEEDPEAESLTLRVTGESHIGGVLLKIVEEIKRKQDWSDHAIWWEQKRQWLLQTHWTLDKYGILADARLFFGPQHRPVILRLPNRRALRLRASFSQPLFQAMVAICRLLSIRHPEEMSLLRAPEKEKKKKKEKEPEEEVYDLTKVVLVGGVAPASFRGMPAHFSDSAQTEACYHMLSRPQPPPDPLLLQRLPRPSSLLDKTQLHSRWLDSSRCLMQQGIKAGDTLWLRFKYYSFFDLDPKTDPVRLTQLYEQARWDLLLEEIDCTEEEMMVFAALQYHINKLSQSGEVDEPAGTDSGLDDLDLALSNLEVKLEGSAPTDMLDSLTTIPELKDHLRIFRPRKLTLKGYRQHWVVFKETTLSYYKSQDEAPGEPIQQLNLKGCEVVPDVNVSGQKFCIKLLVPSPEGMSEIYLRCQDEQQYARWMAGCRLASKGRTMADSSYSSEVQAILAFLSLQRTGGGGGGSGNHPQGPDASAEGLNPYGLVAPRFQRKFKAKQLTPRILEAHQNVAQLSLSEAQLRFIQAWQSLPDFGISYVVVRFKGSRKDEILGIANNRLIRIDLSVGDVVKTWRFSNMRQWNVNWDIRQVAIEFDEHINVAFSCVSASCRIVHEYIGGYIFLSTRERARGEELDEDLFLQLTGGHEAF.

Tyr11 is subject to Phosphotyrosine. The FERM domain occupies 229–556; it reads WLDSSRCLMQ…SLPDFGISYV (328 aa). The PH domain occupies 354–453; that stretch reads DHLRIFRPRK…WMAGCRLASK (100 aa). Tyr502 carries the post-translational modification Phosphotyrosine. Thr589 is subject to Phosphothreonine.

It belongs to the kindlin family. Interacts with ITGB1, ITGB2 and ITGB3 (via cytoplasmic tails).

Its subcellular location is the cell projection. The protein resides in the podosome. Its function is as follows. Plays a central role in cell adhesion in hematopoietic cells. Acts by activating the integrin beta-1-3 (ITGB1, ITGB2 and ITGB3). Required for integrin-mediated platelet adhesion and leukocyte adhesion to endothelial cells. Required for activation of integrin beta-2 (ITGB2) in polymorphonuclear granulocytes (PMNs). This chain is Fermitin family homolog 3 (FERMT3), found in Bos taurus (Bovine).